We begin with the raw amino-acid sequence, 213 residues long: ATP-dependent Clp protease proteolytic subunit (213 aa).

The active-site Nucleophile is serine 114. Residue histidine 139 is part of the active site.

This sequence belongs to the peptidase S14 family. As to quaternary structure, fourteen ClpP subunits assemble into 2 heptameric rings which stack back to back to give a disk-like structure with a central cavity, resembling the structure of eukaryotic proteasomes.

The protein localises to the cytoplasm. It catalyses the reaction Hydrolysis of proteins to small peptides in the presence of ATP and magnesium. alpha-casein is the usual test substrate. In the absence of ATP, only oligopeptides shorter than five residues are hydrolyzed (such as succinyl-Leu-Tyr-|-NHMec, and Leu-Tyr-Leu-|-Tyr-Trp, in which cleavage of the -Tyr-|-Leu- and -Tyr-|-Trp bonds also occurs).. Functionally, cleaves peptides in various proteins in a process that requires ATP hydrolysis. Has a chymotrypsin-like activity. Plays a major role in the degradation of misfolded proteins. The polypeptide is ATP-dependent Clp protease proteolytic subunit (Ectopseudomonas mendocina (strain ymp) (Pseudomonas mendocina)).